Here is a 654-residue protein sequence, read N- to C-terminus: MCQEGLFRLALSSPRKQTACSLGERRTLAEALGLVDSTLESRRDPNSSLQKEFPQHQDEDQSRAAAPQDCLLRDVECIAQKLEASLEEIHRGAREPREEREQRTLGDALENARLEIEKLKDNLMKLKESGTTDLQRAREHNQRLDEEILALRNRVRSLDSEKKVLGEMYLTSGEKTSCQHQGELRELRQNLRRLQILCNSAEKELRYERGRSLDLKQHNSLLQEENIKIKIELKQAQEKLLDNARLHSSLTAEWKHCQQKVKELELEGLRQTQSLKSQQGLQEKLAREKSKAAEAQEKILDLQQKLDHGRQVCLSDVCILRKKQLEEEIKEAKSIEARLQQQCQEEQQRRILLDQDINELQTQVRALQDKEEQQEAVNSQQQEALRKQLERERRKCEEYVKSNQELSEKLSNLQQEKEALWQEHGRFLEQLGDHVRNYKDKHHCHKAKLQKVKDRLTHELEIRNKRIKELEDETGKLQQKIEMEKVFQGQIMAQNDILLLEKRKLLEQVTDQEELICSSKCTISAFQSKASLLDKENQQLQENCLRLMQQIGLLEQIIRSIQIRREEETVITDNAAFEILKKILPLQNSSFSGTGFVLSAENLQETELHKWEGAAAIPKSPEPLSRSQDSESGYINVTSLKETHNTQGDQKPEL.

Positions 38-65 (TLESRRDPNSSLQKEFPQHQDEDQSRAA) are disordered. Basic and acidic residues predominate over residues 53 to 62 (FPQHQDEDQS). Coiled coils occupy residues 97 to 244 (REER…LDNA) and 276 to 559 (KSQQ…QIIR). Positions 614 to 654 (AAAIPKSPEPLSRSQDSESGYINVTSLKETHNTQGDQKPEL) are disordered. Residues 625–654 (SRSQDSESGYINVTSLKETHNTQGDQKPEL) show a composition bias toward polar residues.

This sequence belongs to the prefoldin subunit beta family.

The polypeptide is Coiled-coil domain-containing protein 30 (Ccdc30) (Mus musculus (Mouse)).